The sequence spans 371 residues: Putative transport protein YtvI (371 aa).

9 helical membrane-spanning segments follow: residues 6-26, 30-50, 65-85, 168-188, 225-245, 256-276, 283-303, 312-332, and 334-354; these read ITIF…IAAA, FPLT…HPVV, VLGV…ILVA, FFAL…ATFF, GFIK…FIGL, IAFL…SVFV, SITG…VVLI, ILSK…FAGF, and LFGF…QAFI.

The protein belongs to the autoinducer-2 exporter (AI-2E) (TC 2.A.86) family.

The protein localises to the cell membrane. The chain is Putative transport protein YtvI (ytvI) from Bacillus subtilis (strain 168).